The sequence spans 379 residues: Cytochrome b (379 aa).

A run of 4 helical transmembrane segments spans residues 33-53 (FGSL…FLAM), 77-98 (WLIR…FIHV), 113-133 (WNIG…GYVL), and 178-198 (FFAF…VHLL). Heme b is bound by residues histidine 83 and histidine 97. Residues histidine 182 and histidine 196 each coordinate heme b. Histidine 201 is a binding site for a ubiquinone. 4 consecutive transmembrane segments (helical) span residues 226 to 246 (TKDL…ALFF), 288 to 308 (LGGV…PLLN), 320 to 340 (VTQV…WIGG), and 347 to 367 (FTMI…ILIP).

This sequence belongs to the cytochrome b family. In terms of assembly, the cytochrome bc1 complex contains 11 subunits: 3 respiratory subunits (MT-CYB, CYC1 and UQCRFS1), 2 core proteins (UQCRC1 and UQCRC2) and 6 low-molecular weight proteins (UQCRH/QCR6, UQCRB/QCR7, UQCRQ/QCR8, UQCR10/QCR9, UQCR11/QCR10 and a cleavage product of UQCRFS1). This cytochrome bc1 complex then forms a dimer. Heme b serves as cofactor.

It localises to the mitochondrion inner membrane. In terms of biological role, component of the ubiquinol-cytochrome c reductase complex (complex III or cytochrome b-c1 complex) that is part of the mitochondrial respiratory chain. The b-c1 complex mediates electron transfer from ubiquinol to cytochrome c. Contributes to the generation of a proton gradient across the mitochondrial membrane that is then used for ATP synthesis. The protein is Cytochrome b (MT-CYB) of Akodon lutescens puer (Altiplano grass mouse).